A 344-amino-acid polypeptide reads, in one-letter code: S-adenosylmethionine:tRNA ribosyltransferase-isomerase (344 aa).

The protein belongs to the QueA family. In terms of assembly, monomer.

The protein resides in the cytoplasm. The catalysed reaction is 7-aminomethyl-7-carbaguanosine(34) in tRNA + S-adenosyl-L-methionine = epoxyqueuosine(34) in tRNA + adenine + L-methionine + 2 H(+). It functions in the pathway tRNA modification; tRNA-queuosine biosynthesis. In terms of biological role, transfers and isomerizes the ribose moiety from AdoMet to the 7-aminomethyl group of 7-deazaguanine (preQ1-tRNA) to give epoxyqueuosine (oQ-tRNA). This is S-adenosylmethionine:tRNA ribosyltransferase-isomerase from Acinetobacter baylyi (strain ATCC 33305 / BD413 / ADP1).